The chain runs to 92 residues: Large ribosomal subunit protein bL34m (92 aa).

Residues 1-46 (MALLAGSLLGPTSRSAALLGGRWLQPRAWLGFPDAWGLPTPQQARG) constitute a mitochondrion transit peptide. The segment covering 40 to 57 (TPQQARGKSRGNEYQPSN) has biased composition (polar residues). Residues 40 to 63 (TPQQARGKSRGNEYQPSNIKRKNK) form a disordered region. Residue Ser71 is modified to Phosphoserine.

Belongs to the bacterial ribosomal protein bL34 family. Component of the mitochondrial ribosome large subunit (39S) which comprises a 16S rRNA and about 50 distinct proteins.

It is found in the mitochondrion. The sequence is that of Large ribosomal subunit protein bL34m (MRPL34) from Macaca fascicularis (Crab-eating macaque).